The sequence spans 70 residues: Small ribosomal subunit protein bS18 (70 aa).

The protein belongs to the bacterial ribosomal protein bS18 family. In terms of assembly, part of the 30S ribosomal subunit. Forms a tight heterodimer with protein bS6.

Its function is as follows. Binds as a heterodimer with protein bS6 to the central domain of the 16S rRNA, where it helps stabilize the platform of the 30S subunit. The protein is Small ribosomal subunit protein bS18 of Salinibacter ruber (strain DSM 13855 / M31).